The chain runs to 173 residues: Mitochondrial import inner membrane translocase subunit TIM22-1 (173 aa).

Residues 1–18 constitute a mitochondrion transit peptide; the sequence is MADSSAAEPTTGASSPPV. A disordered region spans residues 1–26; sequence MADSSAAEPTTGASSPPVASDENSTQ. The next 4 helical transmembrane spans lie at 52–72, 101–119, 128–144, and 151–168; these read VTSG…LGAL, SCKT…ECIV, TVNT…SMSA, and ACIG…IEKF.

This sequence belongs to the Tim17/Tim22/Tim23 family. In terms of tissue distribution, expressed in young cotyledons, roots, flowers and leaves.

The protein resides in the mitochondrion inner membrane. In terms of biological role, essential core component of the TIM22 complex, a complex that mediates the import and insertion of multi-pass transmembrane proteins into the mitochondrial inner membrane. The protein is Mitochondrial import inner membrane translocase subunit TIM22-1 (TIM22-1) of Arabidopsis thaliana (Mouse-ear cress).